A 66-amino-acid polypeptide reads, in one-letter code: Phylloseptin-S3 (66 aa).

An N-terminal signal peptide occupies residues 1 to 22 (MAFLKKSLFLVLFLGLVSLSIC). Positions 23 to 46 (EEEKRETEEEEHDQEEDDKSEEKR) are excised as a propeptide. Positions 25-44 (EKRETEEEEHDQEEDDKSEE) are disordered. Acidic residues predominate over residues 30 to 41 (EEEEHDQEEDDK). Phenylalanine 65 is subject to Phenylalanine amide.

Belongs to the frog skin active peptide (FSAP) family. Phylloseptin subfamily. In terms of tissue distribution, expressed by the skin glands.

The protein resides in the secreted. The protein localises to the target cell membrane. Functionally, antimicrobial peptide with activity against the Gram-positive S.pyogenes (MIC=12.5 uM), but not against all other bacteria tested (both Gram-positive and Gram-negative). Does not show activity against fungi, and against Leishmania species. This chain is Phylloseptin-S3, found in Phyllomedusa sauvagei (Sauvage's leaf frog).